Reading from the N-terminus, the 370-residue chain is UDP-N-acetylglucosamine--N-acetylmuramyl-(pentapeptide) pyrophosphoryl-undecaprenol N-acetylglucosamine transferase (370 aa).

UDP-N-acetyl-alpha-D-glucosamine contacts are provided by residues Thr14–Gly16, Asn125, Arg168, Ser196, and Gln297.

The protein belongs to the glycosyltransferase 28 family. MurG subfamily.

It is found in the cell inner membrane. It catalyses the reaction di-trans,octa-cis-undecaprenyl diphospho-N-acetyl-alpha-D-muramoyl-L-alanyl-D-glutamyl-meso-2,6-diaminopimeloyl-D-alanyl-D-alanine + UDP-N-acetyl-alpha-D-glucosamine = di-trans,octa-cis-undecaprenyl diphospho-[N-acetyl-alpha-D-glucosaminyl-(1-&gt;4)]-N-acetyl-alpha-D-muramoyl-L-alanyl-D-glutamyl-meso-2,6-diaminopimeloyl-D-alanyl-D-alanine + UDP + H(+). It functions in the pathway cell wall biogenesis; peptidoglycan biosynthesis. In terms of biological role, cell wall formation. Catalyzes the transfer of a GlcNAc subunit on undecaprenyl-pyrophosphoryl-MurNAc-pentapeptide (lipid intermediate I) to form undecaprenyl-pyrophosphoryl-MurNAc-(pentapeptide)GlcNAc (lipid intermediate II). The polypeptide is UDP-N-acetylglucosamine--N-acetylmuramyl-(pentapeptide) pyrophosphoryl-undecaprenol N-acetylglucosamine transferase (Nitrobacter hamburgensis (strain DSM 10229 / NCIMB 13809 / X14)).